The primary structure comprises 209 residues: Ribosomal RNA large subunit methyltransferase E (209 aa).

Gly-63, Trp-65, Asp-83, Asp-99, and Asp-124 together coordinate S-adenosyl-L-methionine. Lys-164 serves as the catalytic Proton acceptor.

Belongs to the class I-like SAM-binding methyltransferase superfamily. RNA methyltransferase RlmE family.

Its subcellular location is the cytoplasm. It carries out the reaction uridine(2552) in 23S rRNA + S-adenosyl-L-methionine = 2'-O-methyluridine(2552) in 23S rRNA + S-adenosyl-L-homocysteine + H(+). Specifically methylates the uridine in position 2552 of 23S rRNA at the 2'-O position of the ribose in the fully assembled 50S ribosomal subunit. The sequence is that of Ribosomal RNA large subunit methyltransferase E from Cronobacter sakazakii (strain ATCC BAA-894) (Enterobacter sakazakii).